Here is a 92-residue protein sequence, read N- to C-terminus: Antifungal protein B (92 aa).

Positions 1 to 18 (MQITSIAIVFFAAMGAVA) are cleaved as a signal peptide. Residues 19 to 34 (NPIARESDDLDARDVQ) constitute a propeptide that is removed on maturation. 3 disulfide bridges follow: C42–C70, C49–C77, and C62–C88.

It is found in the secreted. The protein resides in the host cytoplasm. In terms of biological role, antifungal protein that acts as an inhibitor of growth of human pathogenic molds and yeasts. Is active against the model organism Neurospora crassa, the opportunistic human pathogens Aspergillus fumigatus, Trichophyton rubrum, and Aspergillus terreus. Provokes a reduction of the incidence of infections caused by Penicillium digitatum and Penicillium italicum in oranges and by Penicillium expansum in apples. Low doses of pafB have self-inhibition activity. Also shows activity against the model yeast Saccaromyces cerevisiae and the opportunistic human pathogen Candida albicans. No antibacterial activity is observed on the Gram-negative Escherichia coli and the Gram-positive Bacillus subtilis. Finally, also shows anti-viral activity in a model of HCoV 229E infected L132 cells. This is Antifungal protein B from Penicillium chrysogenum (Penicillium notatum).